Here is a 375-residue protein sequence, read N- to C-terminus: Succinyl-diaminopimelate desuccinylase (375 aa).

Histidine 66 provides a ligand contact to Zn(2+). Residue aspartate 68 is part of the active site. Position 99 (aspartate 99) interacts with Zn(2+). The Proton acceptor role is filled by glutamate 133. Zn(2+) contacts are provided by glutamate 134, glutamate 162, and histidine 348.

This sequence belongs to the peptidase M20A family. DapE subfamily. Homodimer. Requires Zn(2+) as cofactor. Co(2+) serves as cofactor.

It catalyses the reaction N-succinyl-(2S,6S)-2,6-diaminopimelate + H2O = (2S,6S)-2,6-diaminopimelate + succinate. It participates in amino-acid biosynthesis; L-lysine biosynthesis via DAP pathway; LL-2,6-diaminopimelate from (S)-tetrahydrodipicolinate (succinylase route): step 3/3. Functionally, catalyzes the hydrolysis of N-succinyl-L,L-diaminopimelic acid (SDAP), forming succinate and LL-2,6-diaminopimelate (DAP), an intermediate involved in the bacterial biosynthesis of lysine and meso-diaminopimelic acid, an essential component of bacterial cell walls. The protein is Succinyl-diaminopimelate desuccinylase of Shigella boydii serotype 18 (strain CDC 3083-94 / BS512).